Reading from the N-terminus, the 352-residue chain is Light dependent period A (352 aa).

2 4Fe-4S ferredoxin-type domains span residues 88–119 (RRAW…STGV) and 121–144 (RDRC…AQAW). Residues cysteine 97, cysteine 101, cysteine 105, cysteine 109, cysteine 124, cysteine 127, cysteine 130, and cysteine 134 each coordinate [4Fe-4S] cluster.

As to quaternary structure, interacts with KaiA, CikA and SasA; the complexes do not follow circadian rhythms. [4Fe-4S] cluster serves as cofactor.

Functionally, functions in an input pathway to the Kai circadian clock. Probably senses the metabolic state of the cell via plastoquinone levels and informs the clock to modulate the photoperiod length. Deletion decreases the ability of the bacteria to modulate the circadian period in response to altered light regimes. Mild overexpression increases the photoperiod. Rapidly degraded in the presence of the quinone analog DBMIB (2,5-dibromo-3-methyl-6-isopropyl-p-benzoquinone), an artifical electron acceptor for photosystem II that reduces the plastoquinone pool. Partially resonsible for sensitivity of CikA to DBMIB, influences the levels of KaiA. The polypeptide is Light dependent period A (Synechococcus elongatus (strain ATCC 33912 / PCC 7942 / FACHB-805) (Anacystis nidulans R2)).